The sequence spans 380 residues: Cell division protein ZipA (380 aa).

At 1–7 (MEDNFRN) the chain is on the periplasmic side. The helical transmembrane segment at 8–28 (VLIILSAIVITAIFIHGLWTL) threads the bilayer. Topologically, residues 29–380 (RKQKNPYKLK…DRKSRIALVE (352 aa)) are cytoplasmic.

It belongs to the ZipA family. In terms of assembly, interacts with FtsZ via their C-terminal domains.

It localises to the cell inner membrane. In terms of biological role, essential cell division protein that stabilizes the FtsZ protofilaments by cross-linking them and that serves as a cytoplasmic membrane anchor for the Z ring. Also required for the recruitment to the septal ring of downstream cell division proteins. This chain is Cell division protein ZipA, found in Colwellia psychrerythraea (strain 34H / ATCC BAA-681) (Vibrio psychroerythus).